Reading from the N-terminus, the 529-residue chain is GTPase Obg (529 aa).

The Obg domain occupies 2 to 159; that stretch reads ASFVDRVVLH…SDIVLELKSI (158 aa). The region spanning 160–343 is the OBG-type G domain; that stretch reads ADIALVGFPS…LGFAMAEIVK (184 aa). GTP-binding positions include 166-173, 191-195, 212-215, 295-298, and 324-326; these read GFPSAGKS, FTTLI, DVPG, NKVD, and SAT. Mg(2+) contacts are provided by serine 173 and threonine 193. One can recognise an OCT domain in the interval 363–447; it reads PRAVNETGFR…DDGVVFDWEP (85 aa). The tract at residues 461 to 529 is disordered; it reads GTDIRFADTG…ESGLDSGDES (69 aa). Over residues 462-502 the composition is skewed to basic and acidic residues; it reads TDIRFADTGDRPTRSQKREEQQERRDAKAAARAELEAERKA.

The protein belongs to the TRAFAC class OBG-HflX-like GTPase superfamily. OBG GTPase family. In terms of assembly, monomer. The cofactor is Mg(2+).

The protein localises to the cytoplasm. An essential GTPase which binds GTP, GDP and possibly (p)ppGpp with moderate affinity, with high nucleotide exchange rates and a fairly low GTP hydrolysis rate. Plays a role in control of the cell cycle, stress response, ribosome biogenesis and in those bacteria that undergo differentiation, in morphogenesis control. The chain is GTPase Obg from Pseudarthrobacter chlorophenolicus (strain ATCC 700700 / DSM 12829 / CIP 107037 / JCM 12360 / KCTC 9906 / NCIMB 13794 / A6) (Arthrobacter chlorophenolicus).